Here is a 103-residue protein sequence, read N- to C-terminus: c-Myc-binding protein (103 aa).

This sequence belongs to the AMY1 family. Binds via its C-terminal region to the N-terminal region of MYC. Associates with AKAP1/S-AKAP84. Interacts with MYCBPAP. Interacts with CFAP91.

The protein localises to the cytoplasm. It localises to the nucleus. Functionally, may control the transcriptional activity of MYC. Stimulates the activation of E box-dependent transcription by MYC. The chain is c-Myc-binding protein (MYCBP) from Bos taurus (Bovine).